The sequence spans 294 residues: UDP-3-O-acyl-N-acetylglucosamine deacetylase (294 aa).

Residues His75, His232, and Asp236 each contribute to the Zn(2+) site. Catalysis depends on His259, which acts as the Proton donor.

This sequence belongs to the LpxC family. The cofactor is Zn(2+).

It carries out the reaction a UDP-3-O-[(3R)-3-hydroxyacyl]-N-acetyl-alpha-D-glucosamine + H2O = a UDP-3-O-[(3R)-3-hydroxyacyl]-alpha-D-glucosamine + acetate. It participates in glycolipid biosynthesis; lipid IV(A) biosynthesis; lipid IV(A) from (3R)-3-hydroxytetradecanoyl-[acyl-carrier-protein] and UDP-N-acetyl-alpha-D-glucosamine: step 2/6. Catalyzes the hydrolysis of UDP-3-O-myristoyl-N-acetylglucosamine to form UDP-3-O-myristoylglucosamine and acetate, the committed step in lipid A biosynthesis. In Campylobacter jejuni subsp. jejuni serotype O:6 (strain 81116 / NCTC 11828), this protein is UDP-3-O-acyl-N-acetylglucosamine deacetylase.